The sequence spans 129 residues: Putative reactive intermediate deaminase TdcF (129 aa).

Lys58 is modified (N6-(pyridoxal phosphate)lysine). Substrate is bound by residues 105 to 107 (RSC) and Glu120.

Belongs to the RutC family. In terms of assembly, homotrimer.

The protein operates within amino-acid degradation; L-threonine degradation via propanoate pathway. In terms of biological role, may be a post-translational regulator that controls the metabolic fate of L-threonine or the potentially toxic intermediate 2-ketobutyrate. The polypeptide is Putative reactive intermediate deaminase TdcF (tdcF) (Escherichia coli O6:H1 (strain CFT073 / ATCC 700928 / UPEC)).